Here is a 301-residue protein sequence, read N- to C-terminus: Alpha-ketoglutarate-dependent sulfate ester dioxygenase (301 aa).

Position 81 (H81) interacts with substrate. Fe cation-binding residues include H108 and D110. V111 contributes to the substrate binding site. T135 is a 2-oxoglutarate binding site. A Fe cation-binding site is contributed by H264. The 2-oxoglutarate site is built by R275 and R279.

Belongs to the TfdA dioxygenase family. As to quaternary structure, homotetramer. Requires Fe(2+) as cofactor.

The enzyme catalyses a primary linear alkyl sulfate ester + 2-oxoglutarate + O2 = an aldehyde + sulfate + succinate + CO2 + H(+). The catalysed reaction is 2-ethylhexyl sulfate + 2-oxoglutarate + O2 = 2-ethylhexanal + sulfate + succinate + CO2 + H(+). It carries out the reaction decyl sulfate + 2-oxoglutarate + O2 = decanal + sulfate + succinate + CO2 + H(+). It catalyses the reaction hexyl sulfate + 2-oxoglutarate + O2 = hexanal + sulfate + succinate + CO2 + H(+). The enzyme catalyses nonyl sufate + 2-oxoglutarate + O2 = nonanal + sulfate + succinate + CO2 + H(+). Its activity is regulated as follows. Strongly stimulated by ascorbate. Functionally, catalyzes the oxygenolytic cleavage of 2-ethylhexyl sulfate (2-EHS) in the presence of alpha-ketoglutarate to yield 2-ethyl-hexanal and succinate, the decarboxylated form of alpha-ketoglutarate. It can accept a wide range of alpha-keto acids including 2-oxo-valerate, 2-oxo-adipate, 2-oxo-octanoate, 3-methyl-2-oxo-butyrate, oxaloacetate-alpha-ketoadipate, and alpha-ketooctanoate. It can catalyze the cleavage of medium-chain alkyl sulfate esters such as butylsulfate, pentylsulfate, hexylsulfate, heptylsulfate, octylsulfate, nonylsulfate, decylsulfate and sodium dodecyl sulfate (SDS). The polypeptide is Alpha-ketoglutarate-dependent sulfate ester dioxygenase (Pseudomonas putida (Arthrobacter siderocapsulatus)).